Here is a 265-residue protein sequence, read N- to C-terminus: MKIAIAGASGRMGRMLIEAVLNDADAQLVGALDRAGSPSLGQDAGAFLGKDTGVKLTDDIDAVFAQADYLIDFTRPEGTLAHVEAALRHDVKLVIGTTGFTAEQKAVLHAAAEKVAIVFAANMSVGVNVTLKLLEFAAKHFSHGYDIEIIEAHHRHKVDAPSGTALMMGEAVAGALGRSLDDCAVYGRHGVTGERDPSTIGFAAVRGGDIVGDHTVLFAGIGERIEITHKSSSRVSYAQGALRAVRFLSARDTGLFDMQDVLGLR.

NAD(+)-binding positions include 7–12 (GASGRM) and aspartate 33. Arginine 34 serves as a coordination point for NADP(+). NAD(+) is bound by residues 96 to 98 (GTT) and 120 to 123 (AANM). Histidine 153 acts as the Proton donor/acceptor in catalysis. Histidine 154 is a binding site for (S)-2,3,4,5-tetrahydrodipicolinate. Lysine 157 acts as the Proton donor in catalysis. Position 163 to 164 (163 to 164 (GT)) interacts with (S)-2,3,4,5-tetrahydrodipicolinate.

The protein belongs to the DapB family.

Its subcellular location is the cytoplasm. It carries out the reaction (S)-2,3,4,5-tetrahydrodipicolinate + NAD(+) + H2O = (2S,4S)-4-hydroxy-2,3,4,5-tetrahydrodipicolinate + NADH + H(+). The catalysed reaction is (S)-2,3,4,5-tetrahydrodipicolinate + NADP(+) + H2O = (2S,4S)-4-hydroxy-2,3,4,5-tetrahydrodipicolinate + NADPH + H(+). The protein operates within amino-acid biosynthesis; L-lysine biosynthesis via DAP pathway; (S)-tetrahydrodipicolinate from L-aspartate: step 4/4. Its function is as follows. Catalyzes the conversion of 4-hydroxy-tetrahydrodipicolinate (HTPA) to tetrahydrodipicolinate. The polypeptide is 4-hydroxy-tetrahydrodipicolinate reductase (Burkholderia multivorans (strain ATCC 17616 / 249)).